Here is a 238-residue protein sequence, read N- to C-terminus: Ribonuclease PH (238 aa).

Residues R86 and 124 to 126 (GTR) each bind phosphate.

It belongs to the RNase PH family. Homohexameric ring arranged as a trimer of dimers.

It carries out the reaction tRNA(n+1) + phosphate = tRNA(n) + a ribonucleoside 5'-diphosphate. Its function is as follows. Phosphorolytic 3'-5' exoribonuclease that plays an important role in tRNA 3'-end maturation. Removes nucleotide residues following the 3'-CCA terminus of tRNAs; can also add nucleotides to the ends of RNA molecules by using nucleoside diphosphates as substrates, but this may not be physiologically important. Probably plays a role in initiation of 16S rRNA degradation (leading to ribosome degradation) during starvation. The protein is Ribonuclease PH of Phenylobacterium zucineum (strain HLK1).